We begin with the raw amino-acid sequence, 1299 residues long: DExH-box ATP-dependent RNA helicase DExH6 (1299 aa).

The R3H domain occupies 15 to 82 (PTSVEATRIW…QRRLSIFKSR (68 aa)). Positions 197–366 (TSAVESNQVI…FGGCPVVRVP (170 aa)) constitute a Helicase ATP-binding domain. Residue 210–217 (GETGCGKT) coordinates ATP. The DEIH box motif lies at 313-316 (DEIH). The Helicase C-terminal domain maps to 537–711 (LIQQLMRKIC…ELCLQVKILD (175 aa)). Disordered regions lie at residues 987-1039 (PTGS…MMSS) and 1175-1299 (IPRQ…AEQK). Acidic residues predominate over residues 992 to 1006 (DSDDSNEEEEDDEEV). Low complexity predominate over residues 1007–1020 (AANTNEEVAANTNE). The span at 1023 to 1032 (MDIHKEESRR) shows a compositional bias: basic and acidic residues. Composition is skewed to polar residues over residues 1176–1193 (PRQQ…NNTD), 1204–1214 (NPTNRINQPEA), and 1239–1251 (PSDQ…QHNT). Residues 1182-1200 (KQRNPKATNNTDSGKKKEK) carry the Bipartite nuclear localization signal motif. A Bipartite nuclear localization signal motif is present at residues 1267–1283 (KKTKTRSGNNSDSGKKK). The segment covering 1279-1299 (SGKKKEQYIPKRQREDKAEQK) has biased composition (basic and acidic residues).

This sequence belongs to the DExH box helicase family. In terms of tissue distribution, specifically expressed in the tapetum and vascular tissues.

It is found in the nucleus. It catalyses the reaction ATP + H2O = ADP + phosphate + H(+). May function as an ATP-dependent RNA/DNA helicase. The protein is DExH-box ATP-dependent RNA helicase DExH6 of Arabidopsis thaliana (Mouse-ear cress).